We begin with the raw amino-acid sequence, 511 residues long: GMP synthase [glutamine-hydrolyzing] (511 aa).

One can recognise a Glutamine amidotransferase type-1 domain in the interval 5-195; sequence AILVLDFGSQ…VFKICQAQIN (191 aa). Cys82 serves as the catalytic Nucleophile. Active-site residues include His169 and Glu171. Residues 196 to 386 enclose the GMPS ATP-PPase domain; sequence WSLEGNLETI…LGIKKESLYR (191 aa). 223–229 is a binding site for ATP; the sequence is SGGTDSL.

As to quaternary structure, homodimer.

It catalyses the reaction XMP + L-glutamine + ATP + H2O = GMP + L-glutamate + AMP + diphosphate + 2 H(+). It participates in purine metabolism; GMP biosynthesis; GMP from XMP (L-Gln route): step 1/1. In terms of biological role, catalyzes the synthesis of GMP from XMP. The chain is GMP synthase [glutamine-hydrolyzing] (guaA) from Borreliella burgdorferi (strain ATCC 35210 / DSM 4680 / CIP 102532 / B31) (Borrelia burgdorferi).